Here is a 683-residue protein sequence, read N- to C-terminus: Methionine--tRNA ligase (683 aa).

The 'HIGH' region signature appears at 14–24; it reads PYANGSIHLGH. 4 residues coordinate Zn(2+): C145, C148, C158, and C161. The 'KMSKS' region signature appears at 331-335; sequence KMSKS. ATP is bound at residue K334. Residues 545-572 form a disordered region; it reads ASKEDLTASQTDTGAAAPAGNGELAKDP. Residues 581 to 683 enclose the tRNA-binding domain; the sequence is TFAAVDLRVA…SGAKPGQRIK (103 aa).

Belongs to the class-I aminoacyl-tRNA synthetase family. MetG type 1 subfamily. As to quaternary structure, homodimer. It depends on Zn(2+) as a cofactor.

It localises to the cytoplasm. The catalysed reaction is tRNA(Met) + L-methionine + ATP = L-methionyl-tRNA(Met) + AMP + diphosphate. In terms of biological role, is required not only for elongation of protein synthesis but also for the initiation of all mRNA translation through initiator tRNA(fMet) aminoacylation. The polypeptide is Methionine--tRNA ligase (Pseudomonas fluorescens (strain Pf0-1)).